A 405-amino-acid chain; its full sequence is Sarcosine oxidase subunit beta (405 aa).

FAD is bound by residues glycine 31, histidine 32, glutamate 53, asparagine 61, methionine 62, threonine 66, and isoleucine 68. Residue histidine 173 is modified to Tele-8alpha-FMN histidine. FAD-binding residues include valine 197, glycine 354, glycine 357, and lysine 359.

This sequence belongs to the SoxB family. As to quaternary structure, heterotetramer composed of subunits alpha (SoxA), beta (SoxB), gamma (SoxG) and delta (SoxD). The cofactor is FAD. Requires FMN as cofactor.

It is found in the cytoplasm. It catalyses the reaction sarcosine + (6S)-5,6,7,8-tetrahydrofolate + O2 = (6R)-5,10-methylene-5,6,7,8-tetrahydrofolate + glycine + H2O2. It carries out the reaction sarcosine + O2 + H2O = formaldehyde + glycine + H2O2. Functionally, in the presence of tetrahydrofolate, catalyzes the oxidative demethylation of sarcosine to yield glycine, 5,10-methylenetetrahydrofolate and hydrogen peroxide. In the absence of tetrahydrofolate, catalyzes the oxidative demethylation of sarcosine to yield glycine, formaldehyde and hydrogen peroxide. This is Sarcosine oxidase subunit beta (soxB) from Arthrobacter sp.